Consider the following 521-residue polypeptide: Glutamate--cysteine ligase (521 aa).

This sequence belongs to the glutamate--cysteine ligase type 1 family. Type 1 subfamily.

The catalysed reaction is L-cysteine + L-glutamate + ATP = gamma-L-glutamyl-L-cysteine + ADP + phosphate + H(+). The protein operates within sulfur metabolism; glutathione biosynthesis; glutathione from L-cysteine and L-glutamate: step 1/2. The chain is Glutamate--cysteine ligase (gshA) from Buchnera aphidicola subsp. Baizongia pistaciae (strain Bp).